The primary structure comprises 339 residues: tRNA-specific 2-thiouridylase MnmA (339 aa).

Residues 8-15 (AMSGGVDS) and Met34 contribute to the ATP site. Residue Cys94 is the Nucleophile of the active site. Cysteines 94 and 188 form a disulfide. Position 118 (Gly118) interacts with ATP. The tract at residues 136–138 (KDQ) is interaction with tRNA. Cys188 functions as the Cysteine persulfide intermediate in the catalytic mechanism. Residues 290-291 (RY) form an interaction with tRNA region.

It belongs to the MnmA/TRMU family.

It localises to the cytoplasm. It carries out the reaction S-sulfanyl-L-cysteinyl-[protein] + uridine(34) in tRNA + AH2 + ATP = 2-thiouridine(34) in tRNA + L-cysteinyl-[protein] + A + AMP + diphosphate + H(+). Functionally, catalyzes the 2-thiolation of uridine at the wobble position (U34) of tRNA, leading to the formation of s(2)U34. The protein is tRNA-specific 2-thiouridylase MnmA of Nitratiruptor sp. (strain SB155-2).